We begin with the raw amino-acid sequence, 562 residues long: Dihydroxy-acid dehydratase (562 aa).

Asp-80 contributes to the Mg(2+) binding site. [2Fe-2S] cluster is bound at residue Cys-121. Positions 122 and 123 each coordinate Mg(2+). Lys-123 bears the N6-carboxylysine mark. Cys-194 provides a ligand contact to [2Fe-2S] cluster. Residue Glu-446 participates in Mg(2+) binding. The active-site Proton acceptor is Ser-472.

Belongs to the IlvD/Edd family. In terms of assembly, homodimer. It depends on [2Fe-2S] cluster as a cofactor. Mg(2+) serves as cofactor.

It carries out the reaction (2R)-2,3-dihydroxy-3-methylbutanoate = 3-methyl-2-oxobutanoate + H2O. The catalysed reaction is (2R,3R)-2,3-dihydroxy-3-methylpentanoate = (S)-3-methyl-2-oxopentanoate + H2O. Its pathway is amino-acid biosynthesis; L-isoleucine biosynthesis; L-isoleucine from 2-oxobutanoate: step 3/4. The protein operates within amino-acid biosynthesis; L-valine biosynthesis; L-valine from pyruvate: step 3/4. Functionally, functions in the biosynthesis of branched-chain amino acids. Catalyzes the dehydration of (2R,3R)-2,3-dihydroxy-3-methylpentanoate (2,3-dihydroxy-3-methylvalerate) into 2-oxo-3-methylpentanoate (2-oxo-3-methylvalerate) and of (2R)-2,3-dihydroxy-3-methylbutanoate (2,3-dihydroxyisovalerate) into 2-oxo-3-methylbutanoate (2-oxoisovalerate), the penultimate precursor to L-isoleucine and L-valine, respectively. The protein is Dihydroxy-acid dehydratase of Staphylococcus aureus (strain Mu50 / ATCC 700699).